The following is a 241-amino-acid chain: B-cell receptor-associated protein 29 (241 aa).

Residues 1–6 (MTLQWA) lie on the Lumenal side of the membrane. A helical transmembrane segment spans residues 7–27 (AVATFLYAEIGLILIFCLPFI). The Cytoplasmic portion of the chain corresponds to 28–43 (PPQRWQKIFSFNVWGK). A helical membrane pass occupies residues 44–64 (IATFWNKAFLTIIILLIVLFL). The Lumenal portion of the chain corresponds to 65–103 (DAVREVRKYSSVHTIEKSSTSRPDAYEHTQMKLFRSQRN). The chain crosses the membrane as a helical span at residues 104–124 (LYISGFSLFFWLVLRRLVTLI). The Cytoplasmic portion of the chain corresponds to 125–241 (TQLAKELSNK…RLERGNKKRL (117 aa)). Residues 166 to 233 (GKDEECVLEA…KEHSELQDRL (68 aa)) are a coiled coil. Residues 198-223 (LSKAQNDVMEMKMQSERLSKEYDQLL) are disordered. The segment covering 206-223 (MEMKMQSERLSKEYDQLL) has biased composition (basic and acidic residues). The Di-lysine motif motif lies at 238 to 241 (KKRL).

Belongs to the BCAP29/BCAP31 family. In terms of assembly, homodimer. Heterodimer with BCAP31. Binds CASP8 (isoform 9) as a complex containing BCAP31, BCAP29, BCL2 and/or BCL2L1. Interacts with VAMP3, VAMP1 and membrane IgD immunoglobulins. May interact with ACTG1 and non-muscle myosin II.

The protein resides in the endoplasmic reticulum membrane. Functionally, may play a role in anterograde transport of membrane proteins from the endoplasmic reticulum to the Golgi. May be involved in CASP8-mediated apoptosis. In Homo sapiens (Human), this protein is B-cell receptor-associated protein 29 (BCAP29).